The chain runs to 388 residues: Succinate--CoA ligase [ADP-forming] subunit beta (388 aa).

The ATP-grasp domain maps to 9–244 (KQLFAEFGLP…PSQEDEREAH (236 aa)). Residues lysine 46, 53–55 (GRG), glutamate 99, serine 102, and glutamate 107 each bind ATP. Mg(2+) contacts are provided by asparagine 199 and aspartate 213. Substrate is bound by residues asparagine 264 and 321–323 (GIV).

It belongs to the succinate/malate CoA ligase beta subunit family. In terms of assembly, heterotetramer of two alpha and two beta subunits. It depends on Mg(2+) as a cofactor.

It catalyses the reaction succinate + ATP + CoA = succinyl-CoA + ADP + phosphate. The catalysed reaction is GTP + succinate + CoA = succinyl-CoA + GDP + phosphate. It functions in the pathway carbohydrate metabolism; tricarboxylic acid cycle; succinate from succinyl-CoA (ligase route): step 1/1. Succinyl-CoA synthetase functions in the citric acid cycle (TCA), coupling the hydrolysis of succinyl-CoA to the synthesis of either ATP or GTP and thus represents the only step of substrate-level phosphorylation in the TCA. The beta subunit provides nucleotide specificity of the enzyme and binds the substrate succinate, while the binding sites for coenzyme A and phosphate are found in the alpha subunit. In Vibrio campbellii (strain ATCC BAA-1116), this protein is Succinate--CoA ligase [ADP-forming] subunit beta.